A 502-amino-acid polypeptide reads, in one-letter code: Glycerol kinase (502 aa).

Thr14 serves as a coordination point for ADP. Residues Thr14, Thr15, and Ser16 each coordinate ATP. A sn-glycerol 3-phosphate-binding site is contributed by Thr14. Position 18 (Arg18) interacts with ADP. Residues Arg84, Glu85, and Tyr136 each contribute to the sn-glycerol 3-phosphate site. Glycerol contacts are provided by Arg84, Glu85, and Tyr136. His232 is modified (phosphohistidine; by HPr). Asp246 contributes to the sn-glycerol 3-phosphate binding site. Glycerol-binding residues include Asp246 and Gln247. Residues Thr268 and Gly311 each coordinate ADP. Residues Thr268, Gly311, Gln315, and Gly412 each coordinate ATP. The ADP site is built by Gly412 and Asn416.

Belongs to the FGGY kinase family. In terms of assembly, homotetramer and homodimer (in equilibrium). In terms of processing, the phosphoenolpyruvate-dependent sugar phosphotransferase system (PTS), including enzyme I, and histidine-containing protein (HPr) are required for the phosphorylation, which leads to the activation of the enzyme.

The catalysed reaction is glycerol + ATP = sn-glycerol 3-phosphate + ADP + H(+). Its pathway is polyol metabolism; glycerol degradation via glycerol kinase pathway; sn-glycerol 3-phosphate from glycerol: step 1/1. Activated by phosphorylation and inhibited by fructose 1,6-bisphosphate (FBP). Its function is as follows. Key enzyme in the regulation of glycerol uptake and metabolism. Catalyzes the phosphorylation of glycerol to yield sn-glycerol 3-phosphate. This chain is Glycerol kinase, found in Streptococcus sanguinis (strain SK36).